We begin with the raw amino-acid sequence, 227 residues long: Pyridoxine-5'-phosphate oxidase (227 aa).

20–23 (RKDY) is a binding site for pyridoxal 5'-phosphate. Residue 75 to 78 (RVVL) coordinates FMN. Residue Lys-80 coordinates pyridoxal 5'-phosphate. Residues 90-91 (YT), 96-97 (RK), and Gln-117 each bind FMN. Residues Tyr-135, Arg-139, and Ser-143 each coordinate pyridoxal 5'-phosphate. FMN-binding positions include 152–153 (FQ) and Trp-197. 203–205 (RIH) is a binding site for pyridoxal 5'-phosphate. Arg-207 provides a ligand contact to FMN.

The protein belongs to the pyridoxamine 5'-phosphate oxidase family. As to quaternary structure, homodimer. FMN is required as a cofactor.

It catalyses the reaction pyridoxamine 5'-phosphate + O2 + H2O = pyridoxal 5'-phosphate + H2O2 + NH4(+). The enzyme catalyses pyridoxine 5'-phosphate + O2 = pyridoxal 5'-phosphate + H2O2. It participates in cofactor metabolism; pyridoxal 5'-phosphate salvage; pyridoxal 5'-phosphate from pyridoxamine 5'-phosphate: step 1/1. It functions in the pathway cofactor metabolism; pyridoxal 5'-phosphate salvage; pyridoxal 5'-phosphate from pyridoxine 5'-phosphate: step 1/1. In terms of biological role, catalyzes the oxidation of either pyridoxine 5'-phosphate (PNP) or pyridoxamine 5'-phosphate (PMP) into pyridoxal 5'-phosphate (PLP). The protein is Pyridoxine-5'-phosphate oxidase (pnpo) of Dictyostelium discoideum (Social amoeba).